Reading from the N-terminus, the 131-residue chain is Interleukin-13 (131 aa).

Residues 1 to 18 (MALWLTVVIALTCLGGLA) form the signal peptide. 4 N-linked (GlcNAc...) asparagine glycosylation sites follow: N38, N48, N56, and N71. 2 disulfide bridges follow: C47–C75 and C63–C89.

It belongs to the IL-4/IL-13 family. Interacts with IL13RA2.

The protein localises to the secreted. Cytokine that plays important roles in allergic inflammation and immune response to parasite infection. Synergizes with IL2 in regulating interferon-gamma synthesis. Stimulates B-cell proliferation, and activation of eosinophils, basophils, and mast cells. Plays an important role in controlling IL33 activity by modulating the production of transmembrane and soluble forms of interleukin-1 receptor-like 1/IL1RL1. Displays the capacity to antagonize Th1-driven proinflammatory immune response and downregulates synthesis of many proinflammatory cytokines including IL1, IL6, IL10, IL12 and TNF-alpha through a mechanism that partially involves suppression of NF-kappa-B. Also functions on nonhematopoietic cells, including endothelial cells where it induces vascular cell adhesion protein 1/VCAM1, which is important in the recruitment of eosinophils. Exerts its biological effects through its receptors which comprises the IL4R chain and the IL13RA1 chain, to activate JAK1 and TYK2, leading to the activation of STAT6. Aside from IL13RA1, another receptor IL13RA2 acts as a high affinity decoy for IL13 and mediates internalization and depletion of extracellular IL13. In Canis lupus familiaris (Dog), this protein is Interleukin-13 (IL13).